The sequence spans 307 residues: 4-hydroxythreonine-4-phosphate dehydrogenase (307 aa).

Substrate contacts are provided by His126 and Thr127. Positions 156, 195, and 251 each coordinate a divalent metal cation. Substrate contacts are provided by Lys259, Asn268, and Arg277.

This sequence belongs to the PdxA family. Homodimer. Requires Zn(2+) as cofactor. The cofactor is Mg(2+). It depends on Co(2+) as a cofactor.

It localises to the cytoplasm. The enzyme catalyses 4-(phosphooxy)-L-threonine + NAD(+) = 3-amino-2-oxopropyl phosphate + CO2 + NADH. It participates in cofactor biosynthesis; pyridoxine 5'-phosphate biosynthesis; pyridoxine 5'-phosphate from D-erythrose 4-phosphate: step 4/5. Its function is as follows. Catalyzes the NAD(P)-dependent oxidation of 4-(phosphooxy)-L-threonine (HTP) into 2-amino-3-oxo-4-(phosphooxy)butyric acid which spontaneously decarboxylates to form 3-amino-2-oxopropyl phosphate (AHAP). The protein is 4-hydroxythreonine-4-phosphate dehydrogenase of Helicobacter pylori (strain HPAG1).